Consider the following 337-residue polypeptide: MSEIHLNKAAYIHNLTKICDKAGGKENVIVVLKDNAYGHGARLIASEAKKFGIKNCAVKSECEANEIADIFENILILSHVPTGDESAKFTYAINDIDALLKIKENTKINLAIDTGMHRNGLDISELDYAFEILARRNLELLGAYTHFRASDELNADYFVQRENFSAAKAKILALCDEFGIKKPIFHSHNSAALERASEIKDEMVRVGIAQYGYAQFNGSLNLKPVLSLWAKRVSRRVLKSGQSVGYGAKFIAKDDINVATYDLGYGDGLLRYNGLGELRLANGELILGKISMDSFSCKDSGEWVCVFEDANVWAEFFGTINYDILVKLSPNITRKFI.

K33 acts as the Proton acceptor; specific for D-alanine in catalysis. K33 carries the post-translational modification N6-(pyridoxal phosphate)lysine. Substrate is bound at residue R118. Catalysis depends on Y246, which acts as the Proton acceptor; specific for L-alanine. Residue M292 coordinates substrate.

It belongs to the alanine racemase family. It depends on pyridoxal 5'-phosphate as a cofactor.

It carries out the reaction L-alanine = D-alanine. Its pathway is amino-acid biosynthesis; D-alanine biosynthesis; D-alanine from L-alanine: step 1/1. Catalyzes the interconversion of L-alanine and D-alanine. May also act on other amino acids. This Campylobacter concisus (strain 13826) protein is Alanine racemase (alr).